Reading from the N-terminus, the 1088-residue chain is RNA-directed RNA polymerase (1088 aa).

Residues 501-687 enclose the RdRp catalytic domain; it reads LSYGDVTRFL…AKRYIAGGKI (187 aa).

This sequence belongs to the reoviridae RNA-directed RNA polymerase family. As to quaternary structure, interacts with VP3 (Potential). Interacts with VP2; this interaction activates VP1. Interacts with NSP5; this interaction is probably necessary for the formation of functional virus factories. Interacts with NSP2; this interaction is weak. It depends on Mg(2+) as a cofactor.

It is found in the virion. The enzyme catalyses RNA(n) + a ribonucleoside 5'-triphosphate = RNA(n+1) + diphosphate. Functionally, RNA-directed RNA polymerase that is involved in both transcription and genome replication. Together with VP3 capping enzyme, forms an enzyme complex positioned near the channels situated at each of the five-fold vertices of the core. Following infection, the outermost layer of the virus is lost, leaving a double-layered particle (DLP) made up of the core and VP6 shell. VP1 then catalyzes the transcription of fully conservative plus-strand genomic RNAs that are extruded through the DLP's channels into the cytoplasm where they function as mRNAs for translation of viral proteins. One copy of each of the viral (+)RNAs is also recruited during core assembly, together with newly synthesized polymerase complexes and VP2. The polymerase of these novo-formed particles catalyzes the synthesis of complementary minus-strands leading to dsRNA formation. To do so, the polymerase specifically recognizes and binds 4 bases 5'-UGUG-3' in the conserved 3'-sequence of plus-strand RNA templates. VP2 presumably activates the autoinhibited VP1-RNA complex to coordinate packaging and genome replication. Once dsRNA synthesis is complete, the polymerase switches to the transcriptional mode, thus providing secondary transcription. The sequence is that of RNA-directed RNA polymerase from Rotavirus A (strain RVA/Human/Philippines/L26/1987/G12P1B[4]) (RV-A).